Here is a 412-residue protein sequence, read N- to C-terminus: Probable serine/threonine-protein kinase PBL10 (412 aa).

Residue Gly-2 is the site of N-myristoyl glycine attachment. Cys-4 carries the S-palmitoyl cysteine lipid modification. The interval 15-45 is disordered; that stretch reads GASPKYMSSEANDSLGSKSSSVSIRTNPRTE. Positions 23–43 are enriched in polar residues; that stretch reads SEANDSLGSKSSSVSIRTNPR. Position 58 is a phosphothreonine (Thr-58). The Protein kinase domain occupies 69–356; sequence FRPDSVLGEG…VVSHLEHIQT (288 aa). ATP contacts are provided by residues 75–83 and Lys-107; that span reads LGEGGFGSV. At Tyr-152 the chain carries Phosphotyrosine. The active-site Proton acceptor is the Asp-204. Phosphoserine occurs at positions 208 and 238. A phosphothreonine mark is found at Thr-239 and Thr-244. A Phosphotyrosine modification is found at Tyr-252.

The protein belongs to the protein kinase superfamily. Ser/Thr protein kinase family. In terms of assembly, interacts with the Xanthomonas campestris effector XopAC/AvrAC. Expressed in stomatal guard cells of leaves.

The protein localises to the cell membrane. The catalysed reaction is L-seryl-[protein] + ATP = O-phospho-L-seryl-[protein] + ADP + H(+). The enzyme catalyses L-threonyl-[protein] + ATP = O-phospho-L-threonyl-[protein] + ADP + H(+). In terms of biological role, possible bi-functional kinase. In vitro, it exhibits serine/threonine activity. In vivo, can phosphorylate tyrosine residues of limited substrates. May be involved in plant defense signaling. Required for full light-induced stomatal opening. In Arabidopsis thaliana (Mouse-ear cress), this protein is Probable serine/threonine-protein kinase PBL10.